A 136-amino-acid chain; its full sequence is NADH-quinone oxidoreductase subunit A (136 aa).

A run of 3 helical transmembrane segments spans residues 20-40, 70-90, and 99-119; these read LAVY…VAWW, VPFY…AYIL, and LGWA…VGLV.

It belongs to the complex I subunit 3 family. NDH-1 is composed of 14 different subunits. Subunits NuoA, H, J, K, L, M, N constitute the membrane sector of the complex.

The protein localises to the cell inner membrane. The catalysed reaction is a quinone + NADH + 5 H(+)(in) = a quinol + NAD(+) + 4 H(+)(out). Functionally, NDH-1 shuttles electrons from NADH, via FMN and iron-sulfur (Fe-S) centers, to quinones in the respiratory chain. The immediate electron acceptor for the enzyme in this species is believed to be ubiquinone. Couples the redox reaction to proton translocation (for every two electrons transferred, four hydrogen ions are translocated across the cytoplasmic membrane), and thus conserves the redox energy in a proton gradient. This is NADH-quinone oxidoreductase subunit A from Syntrophobacter fumaroxidans (strain DSM 10017 / MPOB).